The primary structure comprises 293 residues: C-type lectin domain family 4 member G (293 aa).

At 1–31 (MDTTRYSKWGGSSEEVPGGPWGRWVHWSRRP) the chain is on the cytoplasmic side. A Phosphoserine modification is found at serine 12. The helical; Signal-anchor for type II membrane protein transmembrane segment at 32-52 (LFLALAVLVTTVLWAVILSIL) threads the bilayer. Residues 53-293 (LSKASTERAA…GWICEKRHNC (241 aa)) lie on the Extracellular side of the membrane. Asparagine 73 carries an N-linked (GlcNAc...) asparagine glycan. Residues 96-136 (SGTQAQLQTTRAELGEAQAKLMEQESALRELRERVTQGLAE) adopt a coiled-coil conformation. N-linked (GlcNAc...) asparagine glycosylation is present at asparagine 159. In terms of domain architecture, C-type lectin spans 172 to 287 (FEGSCYFFSV…CDSEKDGWIC (116 aa)). The cysteines at positions 264 and 278 are disulfide-linked.

As to quaternary structure, (Microbial infection) Interacts with Japanese encephalitis virus envelope protein E. (Microbial infection) Interacts with ebolavirus glycoprotein. In terms of assembly, (Microbial infection) Interacts with SARS-CoV spike glycoprotein. As to quaternary structure, (Microbial infection) Interacts with lassa virus and Lymphocytic choriomeningitis virus glycoprotein. As to expression, expressed exclusively in fetal and adult liver and in lymph nodes. Specifically expressed by endothelial cells lining lymph node and liver sinuses (at protein level).

It localises to the cell membrane. Binds mannose, N-acetylglucosamine (GlcNAc) and fucose, but not galactose, in a Ca(2+)-dependent manner, in vitro. Functionally, (Microbial infection) Acts as a receptor for Japanese encephalitis virus. In terms of biological role, (Microbial infection) Acts as a receptor for Ebolavirus. Its function is as follows. (Microbial infection) Acts as a receptor for SARS-CoV. (Microbial infection) Acts as a receptor for Lassa virus and Lymphocytic choriomeningitis virus glycoprotein. This chain is C-type lectin domain family 4 member G (CLEC4G), found in Homo sapiens (Human).